A 241-amino-acid chain; its full sequence is MATPHINAEMGDFADVVLMPGDPLRAKYIAETFLQDVKEVCNVRSMFGYTGTYKGRKISVMGHGMGIPSCSIYATELIKDFGVKKIIRVGSCGAVRDDVKLRDVVIGMGASTDSKVNRIRFGGHDFAAIADFGMVQNAVDAAKAKGIPVKVGNIFSADLFYNPDFEFFKTMDKYGIVGVEMEAAGIYGVAAEFGAKALTICTVSDHILRGEATTSEERQLTFNEMMEIALESVLLGDADEA.

His5 is an a purine D-ribonucleoside binding site. Phosphate is bound by residues Gly21, Arg25, Arg44, and 88-91 (RVGS). Residues 180-182 (EME) and 204-205 (SD) each bind a purine D-ribonucleoside. The active-site Proton donor is Asp205.

This sequence belongs to the PNP/UDP phosphorylase family. In terms of assembly, homohexamer; trimer of homodimers.

It carries out the reaction a purine D-ribonucleoside + phosphate = a purine nucleobase + alpha-D-ribose 1-phosphate. The enzyme catalyses a purine 2'-deoxy-D-ribonucleoside + phosphate = a purine nucleobase + 2-deoxy-alpha-D-ribose 1-phosphate. Functionally, catalyzes the reversible phosphorolytic breakdown of the N-glycosidic bond in the beta-(deoxy)ribonucleoside molecules, with the formation of the corresponding free purine bases and pentose-1-phosphate. The sequence is that of Purine nucleoside phosphorylase DeoD-type 1 from Photobacterium profundum (strain SS9).